The primary structure comprises 476 residues: Glycogen synthase (476 aa).

K15 is an ADP-alpha-D-glucose binding site.

The protein belongs to the glycosyltransferase 1 family. Bacterial/plant glycogen synthase subfamily.

The enzyme catalyses [(1-&gt;4)-alpha-D-glucosyl](n) + ADP-alpha-D-glucose = [(1-&gt;4)-alpha-D-glucosyl](n+1) + ADP + H(+). It participates in glycan biosynthesis; glycogen biosynthesis. Its function is as follows. Synthesizes alpha-1,4-glucan chains using ADP-glucose. This chain is Glycogen synthase, found in Bacillus cereus (strain ATCC 10987 / NRS 248).